Here is a 407-residue protein sequence, read N- to C-terminus: Peptidase T (407 aa).

H81 lines the Zn(2+) pocket. The active site involves D83. Position 142 (D142) interacts with Zn(2+). Residue E176 is the Proton acceptor of the active site. Residues E177, D199, and H381 each coordinate Zn(2+).

The protein belongs to the peptidase M20B family. Zn(2+) serves as cofactor.

It is found in the cytoplasm. The enzyme catalyses Release of the N-terminal residue from a tripeptide.. Cleaves the N-terminal amino acid of tripeptides. The polypeptide is Peptidase T (Streptococcus pneumoniae (strain Taiwan19F-14)).